The primary structure comprises 879 residues: Metabotropic glutamate receptor 3 (879 aa).

The first 22 residues, 1-22 (MKMLTRLQVLTLALFSKGFLLS), serve as a signal peptide directing secretion. Over 23–576 (LGDHNFLRRE…EDYIRWEDAW (554 aa)) the chain is Extracellular. Cysteines 57 and 99 form a disulfide. Residues S151 and 172–174 (AST) contribute to the L-glutamate site. A glycan (N-linked (GlcNAc...) asparagine) is linked at N209. Residue Y222 coordinates L-glutamate. 7 disulfide bridges follow: C240–C527, C361–C373, C412–C419, C509–C528, C513–C531, C534–C546, and C549–C562. N-linked (GlcNAc...) asparagine glycosylation is present at N292. D301 contributes to the L-glutamate binding site. K389 serves as a coordination point for L-glutamate. N-linked (GlcNAc...) asparagine glycans are attached at residues N414 and N439. A helical transmembrane segment spans residues 577 to 599 (VIGPVTIACLGFMCTCMVVTVFI). Residues 600 to 613 (KHNNTPLVKASGRE) lie on the Cytoplasmic side of the membrane. The chain crosses the membrane as a helical span at residues 614–634 (LCYILLFGVGLSYCMTFFFIA). Residues 635-645 (KPSPVICALRR) are Extracellular-facing. The helical transmembrane segment at 646–664 (LGLGSSFAICYSALLTKTN) threads the bilayer. The Cytoplasmic portion of the chain corresponds to 665-688 (CIARIFDGVKNGAQRPKFISPSSQ). The helical transmembrane segment at 689-709 (VFICLGLILVQIVMVSVWLIL) threads the bilayer. Over 710–734 (EAPGTRRYTLAEKRETVILKCNVKD) the chain is Extracellular. A helical membrane pass occupies residues 735–756 (SSMLISLTYDVILVILCTVYAF). The Cytoplasmic portion of the chain corresponds to 757–769 (KTRKCPENFNEAK). A helical membrane pass occupies residues 770 to 792 (FIGFTMYTTCIIWLAFLPIFYVT). Residues 793–802 (SSDYRVQTTT) are Extracellular-facing. Residues 803–828 (MCISVSLSGFVVLGCLFAPKVHIILF) form a helical membrane-spanning segment. The Cytoplasmic portion of the chain corresponds to 829–879 (QPQKNVVTHRLHLNRFSVSGTGTTYSQSSASTYVPTVCNGREVLDSTTSSL).

This sequence belongs to the G-protein coupled receptor 3 family. Interacts with TAMALIN.

It is found in the cell membrane. G-protein coupled receptor for glutamate. Ligand binding causes a conformation change that triggers signaling via guanine nucleotide-binding proteins (G proteins) and modulates the activity of down-stream effectors. Signaling inhibits adenylate cyclase activity. In Pongo abelii (Sumatran orangutan), this protein is Metabotropic glutamate receptor 3 (GRM3).